The following is an 833-amino-acid chain: AdoMet-dependent rRNA methyltransferase SPB1 (833 aa).

Residues Gly-59, Trp-61, Asp-79, Asp-95, and Asp-120 each contribute to the S-adenosyl-L-methionine site. The active-site Proton acceptor is Lys-160. 2 coiled-coil regions span residues 348–389 (EEEQ…QLNM) and 453–481 (RDEL…SERD). A compositionally biased stretch (basic and acidic residues) spans 477-493 (KSERDAKFRAKQARESS). Disordered stretches follow at residues 477–532 (KSER…SDDD), 592–645 (KRKL…EKHS), and 776–810 (VTKK…GKYK). Acidic residues-rich tracts occupy residues 505-532 (QSDE…SDDD) and 622-634 (EDGD…DSEE). The segment covering 635 to 645 (EAKRTKQEKHS) has biased composition (basic and acidic residues). Positions 730 to 782 (AEAKARKKHRAVARLEKLKKKAGLINDDSDKSEKDKAEEIAKLMRKVTKKAKQ) form a coiled coil.

The protein belongs to the class I-like SAM-binding methyltransferase superfamily. RNA methyltransferase RlmE family. SPB1 subfamily. Component of the nucleolar and nucleoplasmic pre-60S ribosomal particle.

Its subcellular location is the nucleus. It is found in the nucleolus. The catalysed reaction is a ribonucleotide in rRNA + S-adenosyl-L-methionine = a 2'-O-methylribonucleotide in rRNA + S-adenosyl-L-homocysteine + H(+). Functionally, required for proper assembly of pre-ribosomal particles during the biogenesis of the 60S ribosomal subunit. This Kluyveromyces lactis (strain ATCC 8585 / CBS 2359 / DSM 70799 / NBRC 1267 / NRRL Y-1140 / WM37) (Yeast) protein is AdoMet-dependent rRNA methyltransferase SPB1.